Consider the following 201-residue polypeptide: Large ribosomal subunit protein uL4 (201 aa).

A disordered region spans residues 44-68; the sequence is KAQKTRSEVAGTTKKSKKQKGGGAR.

It belongs to the universal ribosomal protein uL4 family. Part of the 50S ribosomal subunit.

One of the primary rRNA binding proteins, this protein initially binds near the 5'-end of the 23S rRNA. It is important during the early stages of 50S assembly. It makes multiple contacts with different domains of the 23S rRNA in the assembled 50S subunit and ribosome. Its function is as follows. Forms part of the polypeptide exit tunnel. The polypeptide is Large ribosomal subunit protein uL4 (Xanthomonas oryzae pv. oryzae (strain MAFF 311018)).